The sequence spans 311 residues: Formimidoylglutamase (311 aa).

Mn(2+) is bound by residues His-130, Asp-155, His-157, Asp-159, Cys-242, and Asp-244.

This sequence belongs to the arginase family. Requires Mn(2+) as cofactor.

The catalysed reaction is N-formimidoyl-L-glutamate + H2O = formamide + L-glutamate. It functions in the pathway amino-acid degradation; L-histidine degradation into L-glutamate; L-glutamate from N-formimidoyl-L-glutamate (hydrolase route): step 1/1. Catalyzes the conversion of N-formimidoyl-L-glutamate to L-glutamate and formamide. This is Formimidoylglutamase from Staphylococcus haemolyticus (strain JCSC1435).